A 73-amino-acid chain; its full sequence is Cell division protein ZapB (73 aa).

Residues 3–67 are a coiled coil; it reads LELLSKLETK…WNDKVTGLVG (65 aa).

Belongs to the ZapB family. Homodimer. The ends of the coiled-coil dimer bind to each other, forming polymers. Interacts with FtsZ.

It localises to the cytoplasm. Non-essential, abundant cell division factor that is required for proper Z-ring formation. It is recruited early to the divisome by direct interaction with FtsZ, stimulating Z-ring assembly and thereby promoting cell division earlier in the cell cycle. Its recruitment to the Z-ring requires functional FtsA or ZipA. The protein is Cell division protein ZapB of Shewanella sp. (strain ANA-3).